A 270-amino-acid chain; its full sequence is Eukaryotic translation initiation factor 2 subunit beta (270 aa).

Residues 1-38 (MADEEQMERKEEATEIAPFDPTKKKKKKKVVIQDPADE) are disordered.

Belongs to the eIF-2-beta/eIF-5 family. In terms of assembly, eukaryotic translation initiation factor 2 eIF2 is a heterotrimeric complex composed of an alpha, a beta and a gamma subunit.

Its subcellular location is the cytoplasm. The protein localises to the cytosol. Component of the eIF2 complex that functions in the early steps of protein synthesis by forming a ternary complex with GTP and initiator tRNA. This complex binds to a 40S ribosomal subunit, followed by mRNA binding to form a 43S pre-initiation complex (43S PIC). Junction of the 60S ribosomal subunit to form the 80S initiation complex is preceded by hydrolysis of the GTP bound to eIF2 and release of an eIF2-GDP binary complex. In order for eIF2 to recycle and catalyze another round of initiation, the GDP bound to eIF2 must exchange with GTP by way of a reaction catalyzed by eIF2B. The chain is Eukaryotic translation initiation factor 2 subunit beta from Triticum aestivum (Wheat).